A 722-amino-acid polypeptide reads, in one-letter code: MEDKDELSRLRALFHTFDSKSSGRLEKGQFSALCAELKVSPSEAEDIFARLDSDKDSCITFEDFAMGFRGARGLHMPEGKKDVEQGEPPKSPSTPDKEEKPEETSSPAWEDFQRRLADEVNYIPRREQASILYQNINIVEPLLIQQYEHVIRNFVREIRLQSTEMENLAIAVKRAQDKAAIQLSELEEEMDQRIQAVEKRVKKEEKRKSEEALNDLKRQHESEVAELQVTIKKLKKLEEQSKNINLKEDVAVLRRRLHDLTMENQKLRKDLLEAQTSISFLQSELDALKSDYADQSLSSERDMDIIRGFTDERENLARQIEILQTANRKLHDSNDGLRSALENSLMKYNRSLRTINTSPGSTISRNSPKLTRCTSPYDRSPRSSYLDEDYDSLAVCDPMQRMNCEVDSLPESCIDSGLSTLRDSNEYDSEAEYRPPRIFHRSRFPHENYGGDASDTDVPEIRDEESYAPDNGGNLDWKPSNPVSRSSSGASSSRKCISALSANVTSAETVDKVHKYTHAEKAYKIVLAGDAAVGKSSFLMRLCKNEFRGNTSATLGVDFQMKTLVVDGEPTILQLWDTAGQERFRSIAKSYFRRADGVLLLYDVTCEKSFLNVREWIDMIEDATSEAIPIMMVGNKADLRQLMAEQGHICVSTNYGEKLSRTYGALFCETSAKEGSNIVEAVLHLAREVRKRCDNEDDRGSVTNLSAAISKKPAQMKNCCNV.

2 consecutive EF-hand domains span residues 5–39 (DELS…ELKV) and 39–74 (VSPS…ARGL). Residues 75-84 (HMPEGKKDVE) show a composition bias toward basic and acidic residues. The segment at 75 to 109 (HMPEGKKDVEQGEPPKSPSTPDKEEKPEETSSPAW) is disordered. A coiled-coil region spans residues 156–335 (REIRLQSTEM…ANRKLHDSND (180 aa)). Residues 355 to 374 (INTSPGSTISRNSPKLTRCT) show a composition bias toward polar residues. Disordered regions lie at residues 355 to 384 (INTS…PRSS) and 439 to 491 (FHRS…SGAS). Residues 480-491 (SNPVSRSSSGAS) show a composition bias toward low complexity. GTP is bound by residues 532–537 (AVGKSS), 635–638 (NKAD), and 672–673 (AK).

The protein belongs to the small GTPase superfamily. Rab family. In terms of assembly, homodimer.

Its subcellular location is the cytoplasm. It is found in the perinuclear region. Functionally, binds predominantly GDP, and also GTP. The protein is Ras and EF-hand domain-containing protein (rasef) of Xenopus tropicalis (Western clawed frog).